Consider the following 878-residue polypeptide: Probable LRR receptor-like serine/threonine-protein kinase MEE39 (878 aa).

A signal peptide spans 1-25; that stretch reads MKNLCWVFLSLFWFGVFLIIRFAEG. Residues 26–514 are Extracellular-facing; sequence QNQEGFISLD…IDKPKKKVAV (489 aa). Asn183, Asn203, Asn235, Asn290, Asn404, Asn418, Asn445, and Asn466 each carry an N-linked (GlcNAc...) asparagine glycan. LRR repeat units follow at residues 413–436, 437–458, and 461–483; these read RIISLNLSSSGLSGTIVSNFQNLA, HLESLDLSNNSLSGIVPEFLAT, and SLLVINLSGNKLSGAIPQALRDR. A helical membrane pass occupies residues 515–535; the sequence is KVVAPVASIAAIVVVILLFVF. The Cytoplasmic segment spans residues 536-878; the sequence is KKKMSSRNKP…FDTDVKPKAR (343 aa). Residue Thr557 is modified to Phosphothreonine. The region spanning 566 to 840 is the Protein kinase domain; sequence KNLQRPLGEG…QVIINLKECL (275 aa). ATP-binding positions include 572 to 580 and Lys594; that span reads LGEGGFGVV. Phosphotyrosine is present on Tyr639. Asp691 functions as the Proton acceptor in the catalytic mechanism. Phosphoserine is present on Ser726. Residues Thr727 and Thr732 each carry the phosphothreonine modification. Position 740 is a phosphotyrosine (Tyr740). The segment covering 849 to 869 has biased composition (polar residues); the sequence is RNNQNMDSGHSSDQLNVTVTF. The segment at 849–878 is disordered; the sequence is RNNQNMDSGHSSDQLNVTVTFDTDVKPKAR.

The protein belongs to the protein kinase superfamily. Ser/Thr protein kinase family.

It is found in the membrane. It catalyses the reaction L-seryl-[protein] + ATP = O-phospho-L-seryl-[protein] + ADP + H(+). The catalysed reaction is L-threonyl-[protein] + ATP = O-phospho-L-threonyl-[protein] + ADP + H(+). Its function is as follows. Receptor-like serine/threonine-kinase required during the endosperm development in seeds. This Arabidopsis thaliana (Mouse-ear cress) protein is Probable LRR receptor-like serine/threonine-protein kinase MEE39 (MEE39).